The chain runs to 920 residues: Sensor histidine kinase SsrA (920 aa).

Over 1-19 (MNLLNLKNTLQTSLVIRLT) the chain is Cytoplasmic. Residues 20-40 (FLFLLTTIIIWLLSVLTAAYI) traverse the membrane as a helical segment. The Periplasmic portion of the chain corresponds to 41 to 291 (SMVQKRQHII…YGNLHNRILK (251 aa)). The helical transmembrane segment at 292 to 312 (IILQQIPFTLTALVLMTSAFC) threads the bilayer. At 313–920 (WLLHRSLAKP…RMIFKNYTIT (608 aa)) the chain is on the cytoplasmic side. The HAMP domain occupies 317 to 369 (RSLAKPLWRFVDVINKTATAPLSTRLPAQRLDELDSIAGAFNQLLDTLQVQYD). Positions 354-395 (AGAFNQLLDTLQVQYDNLENKVAERTQALNEAKKRAERANKR) form a coiled coil. A Histidine kinase domain is found at 402–614 (VISHELRTPM…CVSLVLPLQE (213 aa)). His-405 and Asp-549 together coordinate ATP. His-405 is subject to Phosphohistidine; by autocatalysis. Residues 690 to 808 (QILLVDDADI…TLARYISIAA (119 aa)) enclose the Response regulatory domain. Asp-739 bears the 4-aspartylphosphate mark.

Autophosphorylated.

Its subcellular location is the cell inner membrane. The enzyme catalyses ATP + protein L-histidine = ADP + protein N-phospho-L-histidine.. Member of the two-component regulatory system SsrA/SsrB (SpiR/SsrB) that is required for intracellular proliferation and systemic dissemination within the host. When inside acidic Salmonella-containing vesicles (SCV) within host cells the SsrA sensor kinase autophosphorylates and the phosphoryl group is transferred to the response regulator SsrB; phosphorylated SsrB activates the expression of genes encoding virulence proteins, including pathogenicity island 2 (SPI2) and other horizontally acquired genes, and antagonizes the action of transcriptional repressor hns (H-NS). The sequence is that of Sensor histidine kinase SsrA from Salmonella typhimurium (strain LT2 / SGSC1412 / ATCC 700720).